Reading from the N-terminus, the 211-residue chain is Imidazole glycerol phosphate synthase subunit HisH (211 aa).

The region spanning 1–211 is the Glutamine amidotransferase type-1 domain; that stretch reads MIGIIDYGMG…VGIATGRGNG (211 aa). Cysteine 79 acts as the Nucleophile in catalysis. Catalysis depends on residues histidine 186 and glutamate 188.

Heterodimer of HisH and HisF.

It localises to the cytoplasm. The enzyme catalyses 5-[(5-phospho-1-deoxy-D-ribulos-1-ylimino)methylamino]-1-(5-phospho-beta-D-ribosyl)imidazole-4-carboxamide + L-glutamine = D-erythro-1-(imidazol-4-yl)glycerol 3-phosphate + 5-amino-1-(5-phospho-beta-D-ribosyl)imidazole-4-carboxamide + L-glutamate + H(+). It carries out the reaction L-glutamine + H2O = L-glutamate + NH4(+). The protein operates within amino-acid biosynthesis; L-histidine biosynthesis; L-histidine from 5-phospho-alpha-D-ribose 1-diphosphate: step 5/9. IGPS catalyzes the conversion of PRFAR and glutamine to IGP, AICAR and glutamate. The HisH subunit catalyzes the hydrolysis of glutamine to glutamate and ammonia as part of the synthesis of IGP and AICAR. The resulting ammonia molecule is channeled to the active site of HisF. The sequence is that of Imidazole glycerol phosphate synthase subunit HisH from Geobacillus kaustophilus (strain HTA426).